The following is a 394-amino-acid chain: MASFISLSSKSASWNASSCPHPSVQPFVTRKNVVRYHKPTSSEPSYSPLTTTLSSNLNSQFMQVYETLKSELIHDPLFEFDDDSRQWVERMIDYTVPGGKMVRGYSVVDSYQLLKGEELTEEEAFLACALGWCTEWFQAFILLHDDMMDGSHTRRGQPCWFRLPEVGAVAINDGVLLRNHVHRILKKHFQGKAYYVHLVDLFNETEFQTISGQMIDTISRLAGQKELSKYSMSLNRRIVQYKGAYYSCYLPIACALLMFGENLDDYVQVKDILVELGMYYQIQNDYLDTFGDPNVFGKTGTDIEECKCSWLIAKALELANEEQKKILSENYGIKDPAKVAKVKEIYHALNLKGAYEDYETNLYENSMKAIKAHPSIAVQAVLKSCLEKMYKGHK.

The N-terminal 65 residues, 1–65 (MASFISLSSK…NLNSQFMQVY (65 aa)), are a transit peptide targeting the chloroplast. Isopentenyl diphosphate-binding residues include Lys100, Arg103, and Gln138. Positions 145 and 149 each coordinate Mg(2+). A DDXXD motif motif is present at residues 145–149 (DDMMD). A dimethylallyl diphosphate-binding site is contributed by Arg154. Arg155 contributes to the isopentenyl diphosphate binding site. Dimethylallyl diphosphate contacts are provided by Lys242, Gln281, Lys298, and Lys307.

This sequence belongs to the FPP/GGPP synthase family. Mg(2+) serves as cofactor. It depends on Mn(2+) as a cofactor.

It localises to the plastid. The protein resides in the chloroplast. The catalysed reaction is isopentenyl diphosphate + dimethylallyl diphosphate = (2E)-geranyl diphosphate + diphosphate. The enzyme catalyses 2 dimethylallyl diphosphate = (R,R)-chrysanthemyl diphosphate + diphosphate. It catalyses the reaction 2 dimethylallyl diphosphate = (R)-lavandulyl diphosphate + diphosphate. Functionally, condenses two molecules of dimethylallyl diphosphate (DMAPP) to produce mainly an irregular monoterpene, chrysanthemyl diphosphate (CPP) and lower amounts of a branched monoterpene, lavandulyl diphosphate (LPP). CPP is a precursor of the pyrethrin insecticides. When incubated with isopentenyl diphosphate (IPP) and DMAPP, catalyzes three competing isoprenoid condensation reactions, a chain elongation to give geranyl diphosphate (GPP), a cyclopropanation to give CPP and a branching to give LPP. The protein is Monoterpene synthase FDS-5, chloroplastic (FDS-5) of Artemisia spiciformis (Spiked big sagebrush).